A 265-amino-acid chain; its full sequence is Mlc titration factor A (265 aa).

Zn(2+) contacts are provided by H111, H148, H152, and E211.

Belongs to the MtfA family. In terms of assembly, interacts with Mlc. It depends on Zn(2+) as a cofactor.

Its subcellular location is the cytoplasm. Involved in the modulation of the activity of the glucose-phosphotransferase system (glucose-PTS). Interacts with the transcriptional repressor Mlc, preventing its interaction with DNA and leading to the modulation of expression of genes regulated by Mlc, including ptsG, which encodes the PTS system glucose-specific EIICB component. Functionally, shows zinc-dependent metallopeptidase activity. The protein is Mlc titration factor A of Enterobacter sp. (strain 638).